The sequence spans 357 residues: Biotin synthase (357 aa).

The tract at residues 1–27 is disordered; sequence MTTAETKPATETGENAGTTGTAGTAAT. Residues 9–27 show a composition bias toward low complexity; it reads ATETGENAGTTGTAGTAAT. The Radical SAM core domain maps to 78–303; that stretch reads DAVEMEGIIS…RQLLRFAGGR (226 aa). The [4Fe-4S] cluster site is built by C93, C97, and C100. [2Fe-2S] cluster-binding residues include C136, C228, and R298.

This sequence belongs to the radical SAM superfamily. Biotin synthase family. In terms of assembly, homodimer. The cofactor is [4Fe-4S] cluster. Requires [2Fe-2S] cluster as cofactor.

The catalysed reaction is (4R,5S)-dethiobiotin + (sulfur carrier)-SH + 2 reduced [2Fe-2S]-[ferredoxin] + 2 S-adenosyl-L-methionine = (sulfur carrier)-H + biotin + 2 5'-deoxyadenosine + 2 L-methionine + 2 oxidized [2Fe-2S]-[ferredoxin]. It functions in the pathway cofactor biosynthesis; biotin biosynthesis; biotin from 7,8-diaminononanoate: step 2/2. Functionally, catalyzes the conversion of dethiobiotin (DTB) to biotin by the insertion of a sulfur atom into dethiobiotin via a radical-based mechanism. The polypeptide is Biotin synthase (Corynebacterium jeikeium (strain K411)).